Reading from the N-terminus, the 241-residue chain is Homeobox protein TGIF2LX (241 aa).

Disordered regions lie at residues 1-58 (MEAA…GNLP) and 126-209 (TGKD…VSPE). Polar residues predominate over residues 21-39 (AKTQSPAQDTSIMSRNNAD). The segment at residues 48–111 (EHKKKRKGNL…INARRRILPD (64 aa)) is a DNA-binding region (homeobox; TALE-type).

It belongs to the TALE/TGIF homeobox family.

The protein resides in the nucleus. In terms of biological role, may have a transcription role in testis. This Gorilla gorilla gorilla (Western lowland gorilla) protein is Homeobox protein TGIF2LX (TGIF2LX).